The following is a 244-amino-acid chain: Ribosomal RNA small subunit methyltransferase G (244 aa).

Residues Gly84, Phe89, 107–109 (DST), 135–136 (AE), and Arg154 contribute to the S-adenosyl-L-methionine site.

Belongs to the methyltransferase superfamily. RNA methyltransferase RsmG family.

The protein localises to the cytoplasm. Functionally, specifically methylates the N7 position of a guanine in 16S rRNA. This chain is Ribosomal RNA small subunit methyltransferase G, found in Nostoc punctiforme (strain ATCC 29133 / PCC 73102).